The sequence spans 1845 residues: Proteasome adapter and scaffold protein ECM29 (1845 aa).

A2 is modified (N-acetylalanine). HEAT repeat units follow at residues 28–65 (TDEQ…LVHL), 107–144 (YPRL…LIPT), 162–205 (NLAE…QGSS), 326–362 (RDPV…YDGL), 387–426 (PEIK…VGKL), 429–466 (RMPH…LSMM), 469–507 (AYST…ASTV), 683–720 (YPEK…YSVV), 721–759 (VSTV…LGFT), 783–820 (TLPD…LGEI), 829–868 (PSEG…LGYF), 870–907 (VGDG…ITSA), 931–969 (AGAK…LLSL), 975–1012 (THKE…LGLV), 1013–1050 (YELG…VVFQ), 1112–1149 (AGEQ…WNAL), 1152–1189 (DKSM…LNDL), 1194–1231 (PLDD…LKTL), 1243–1281 (KGAA…LVKI), 1285–1323 (AGAM…TEQE), 1348–1386 (LQYL…IVSL), 1390–1427 (CPQD…MGHL), 1517–1554 (SFGG…MASI), 1558–1595 (TSSL…IACV), 1605–1642 (KSVP…AADI), 1646–1683 (TKED…ENEK), and 1779–1822 (TYSS…LATM). Residues 193–207 (QSRQNSSSAQGSSSN) show a composition bias toward low complexity. Residues 193-217 (QSRQNSSSAQGSSSNSGGGSGIPQP) form a disordered region. A Phosphoserine modification is found at S830. T836 is modified (phosphothreonine). K1039 is covalently cross-linked (Glycyl lysine isopeptide (Lys-Gly) (interchain with G-Cter in SUMO1)).

The protein belongs to the ECM29 family. As to quaternary structure, non-stoichiometric component of the proteasome; associates with the 26S proteasome. Interacts (via N-terminus) with VPS11, VPS26A, VPS36, RAB11FIP4 and RABEP1. Interacts (via C-terminus) with DCTN1, DCTN2, KIF5B, MYH7, MYH10, MYO10 and ARF6.

The protein localises to the endoplasmic reticulum. The protein resides in the endoplasmic reticulum-Golgi intermediate compartment. Its subcellular location is the endosome. It is found in the cytoplasm. It localises to the cytoskeleton. The protein localises to the microtubule organizing center. The protein resides in the centrosome. Its subcellular location is the nucleus. It is found in the multivesicular body. It localises to the cytoplasmic vesicle. Adapter/scaffolding protein that binds to the 26S proteasome, motor proteins and other compartment specific proteins. May couple the proteasome to different compartments including endosome, endoplasmic reticulum and centrosome. May play a role in ERAD and other enhanced proteolysis. Promotes proteasome dissociation under oxidative stress. The sequence is that of Proteasome adapter and scaffold protein ECM29 from Homo sapiens (Human).